A 428-amino-acid polypeptide reads, in one-letter code: Adenylosuccinate synthetase (428 aa).

GTP-binding positions include 12-18 and 40-42; these read GDEGKGK and GHT. Aspartate 13 acts as the Proton acceptor in catalysis. Residues aspartate 13 and glycine 40 each contribute to the Mg(2+) site. IMP contacts are provided by residues 13–16, 38–41, threonine 129, arginine 143, glutamine 224, threonine 239, and arginine 303; these read DEGK and NAGH. Histidine 41 functions as the Proton donor in the catalytic mechanism. 299 to 305 provides a ligand contact to substrate; the sequence is VTTGRIR. GTP is bound by residues arginine 305, 331–333, and 410–412; these read KVD and AYG.

It belongs to the adenylosuccinate synthetase family. As to quaternary structure, homodimer. Requires Mg(2+) as cofactor.

It localises to the cytoplasm. The enzyme catalyses IMP + L-aspartate + GTP = N(6)-(1,2-dicarboxyethyl)-AMP + GDP + phosphate + 2 H(+). Its pathway is purine metabolism; AMP biosynthesis via de novo pathway; AMP from IMP: step 1/2. Plays an important role in the de novo pathway of purine nucleotide biosynthesis. Catalyzes the first committed step in the biosynthesis of AMP from IMP. The polypeptide is Adenylosuccinate synthetase (Francisella tularensis subsp. mediasiatica (strain FSC147)).